The following is a 99-amino-acid chain: RNA-binding protein Hfq (99 aa).

Residues 9–68 form the Sm domain; it reads DPYLNALRRERIPVSIYLVNGIKLQGQIESFDQFVILLKNTVNQMVYKHAISTVVPARSV. Residues 67–99 form a disordered region; that stretch reads SVSHHNNNAQQQYQQQAAQAASAQSNETSSQAE. A compositionally biased stretch (low complexity) spans 72–99; it reads NNNAQQQYQQQAAQAASAQSNETSSQAE.

The protein belongs to the Hfq family. In terms of assembly, homohexamer.

In terms of biological role, RNA chaperone that binds small regulatory RNA (sRNAs) and mRNAs to facilitate mRNA translational regulation in response to envelope stress, environmental stress and changes in metabolite concentrations. Also binds with high specificity to tRNAs. This is RNA-binding protein Hfq from Actinobacillus succinogenes (strain ATCC 55618 / DSM 22257 / CCUG 43843 / 130Z).